Consider the following 261-residue polypeptide: Cytochrome c oxidase subunit 3 (261 aa).

The Mitochondrial matrix segment spans residues 1-15 (MTHQTHAYHMVNPSP). The chain crosses the membrane as a helical span at residues 16-34 (WPLTGALSALLMTSGLIMW). Topologically, residues 35-40 (FHFNST) are mitochondrial intermembrane. The chain crosses the membrane as a helical span at residues 41 to 66 (TLLMLGLTTNMLTMYQWWRDVIREST). Over 67–72 (FQGHHT) the chain is Mitochondrial matrix. The chain crosses the membrane as a helical span at residues 73-105 (PNVQKGLRYGMILFIISEVLFFTGFFWAFYHSS). The Mitochondrial intermembrane segment spans residues 106–128 (LAPTPELGGCWPPTGINPLNPLE). A helical transmembrane segment spans residues 129–152 (VPLLNTSVLLASGVSITWAHHSLM). Over 153 to 155 (EGN) the chain is Mitochondrial matrix. The helical transmembrane segment at 156–183 (RNHMLQALFITIALGVYFTLLQASEYYE) threads the bilayer. At 184–190 (APFTISD) the chain is on the mitochondrial intermembrane side. The helical transmembrane segment at 191 to 223 (GVYGSTFFVATGFHGLHVIIGSTFLIVCFFRQL) threads the bilayer. The Mitochondrial matrix segment spans residues 224 to 232 (KFHFTSNHH). A helical transmembrane segment spans residues 233-256 (FGFEAAAWYWHFVDVVWLFLYVSI). Residues 257-261 (YWWGS) are Mitochondrial intermembrane-facing.

It belongs to the cytochrome c oxidase subunit 3 family. In terms of assembly, component of the cytochrome c oxidase (complex IV, CIV), a multisubunit enzyme composed of 14 subunits. The complex is composed of a catalytic core of 3 subunits MT-CO1, MT-CO2 and MT-CO3, encoded in the mitochondrial DNA, and 11 supernumerary subunits COX4I, COX5A, COX5B, COX6A, COX6B, COX6C, COX7A, COX7B, COX7C, COX8 and NDUFA4, which are encoded in the nuclear genome. The complex exists as a monomer or a dimer and forms supercomplexes (SCs) in the inner mitochondrial membrane with NADH-ubiquinone oxidoreductase (complex I, CI) and ubiquinol-cytochrome c oxidoreductase (cytochrome b-c1 complex, complex III, CIII), resulting in different assemblies (supercomplex SCI(1)III(2)IV(1) and megacomplex MCI(2)III(2)IV(2)).

The protein resides in the mitochondrion inner membrane. It carries out the reaction 4 Fe(II)-[cytochrome c] + O2 + 8 H(+)(in) = 4 Fe(III)-[cytochrome c] + 2 H2O + 4 H(+)(out). In terms of biological role, component of the cytochrome c oxidase, the last enzyme in the mitochondrial electron transport chain which drives oxidative phosphorylation. The respiratory chain contains 3 multisubunit complexes succinate dehydrogenase (complex II, CII), ubiquinol-cytochrome c oxidoreductase (cytochrome b-c1 complex, complex III, CIII) and cytochrome c oxidase (complex IV, CIV), that cooperate to transfer electrons derived from NADH and succinate to molecular oxygen, creating an electrochemical gradient over the inner membrane that drives transmembrane transport and the ATP synthase. Cytochrome c oxidase is the component of the respiratory chain that catalyzes the reduction of oxygen to water. Electrons originating from reduced cytochrome c in the intermembrane space (IMS) are transferred via the dinuclear copper A center (CU(A)) of subunit 2 and heme A of subunit 1 to the active site in subunit 1, a binuclear center (BNC) formed by heme A3 and copper B (CU(B)). The BNC reduces molecular oxygen to 2 water molecules using 4 electrons from cytochrome c in the IMS and 4 protons from the mitochondrial matrix. The chain is Cytochrome c oxidase subunit 3 (MT-CO3) from Gazella subgutturosa (Goitred gazelle).